Consider the following 201-residue polypeptide: Recombination protein RecR (201 aa).

The C4-type zinc finger occupies 57 to 72; that stretch reads CADCRTFTEQEVCNIC. The region spanning 81–176 is the Toprim domain; the sequence is GQICVVESPA…EASRIAHGVP (96 aa).

It belongs to the RecR family.

Its function is as follows. May play a role in DNA repair. It seems to be involved in an RecBC-independent recombinational process of DNA repair. It may act with RecF and RecO. This Salmonella arizonae (strain ATCC BAA-731 / CDC346-86 / RSK2980) protein is Recombination protein RecR.